Reading from the N-terminus, the 172-residue chain is Carotene biosynthesis-related protein CBR, chloroplastic (172 aa).

Residues 41-66 are disordered; it reads AENNPSTPPPSSPSPPPPPPTPAAPT. Pro residues predominate over residues 46-63; that stretch reads STPPPSSPSPPPPPPTPA. The next 2 helical transmembrane spans lie at 111-131 and 152-172; these read PTLI…PAFA and FAMI…IALF.

Belongs to the ELIP/psbS family.

The protein resides in the plastid. Its subcellular location is the chloroplast membrane. Functionally, putative zeaxanthin binding protein. That forms photoprotective complexes within the light-harvesting antennae. The polypeptide is Carotene biosynthesis-related protein CBR, chloroplastic (CBR) (Dunaliella salina (Green alga)).